Here is a 424-residue protein sequence, read N- to C-terminus: Adenylosuccinate synthetase (424 aa).

Residues 12–18 (GDEGKGK) and 40–42 (GHT) contribute to the GTP site. Asp13 serves as the catalytic Proton acceptor. Mg(2+) is bound by residues Asp13 and Gly40. IMP-binding positions include 13–16 (DEGK), 38–41 (NAGH), Thr130, Arg144, Asn220, Thr235, and Arg299. His41 (proton donor) is an active-site residue. 295 to 301 (VTTGRRR) provides a ligand contact to substrate. GTP is bound by residues Arg301, 327–329 (KLD), and 412–414 (GTG).

Belongs to the adenylosuccinate synthetase family. As to quaternary structure, homodimer. Requires Mg(2+) as cofactor.

The protein localises to the cytoplasm. It carries out the reaction IMP + L-aspartate + GTP = N(6)-(1,2-dicarboxyethyl)-AMP + GDP + phosphate + 2 H(+). It functions in the pathway purine metabolism; AMP biosynthesis via de novo pathway; AMP from IMP: step 1/2. Its function is as follows. Plays an important role in the de novo pathway and in the salvage pathway of purine nucleotide biosynthesis. Catalyzes the first committed step in the biosynthesis of AMP from IMP. This Aspergillus clavatus (strain ATCC 1007 / CBS 513.65 / DSM 816 / NCTC 3887 / NRRL 1 / QM 1276 / 107) protein is Adenylosuccinate synthetase.